Consider the following 260-residue polypeptide: Thiazole synthase (260 aa).

Lysine 100 acts as the Schiff-base intermediate with DXP in catalysis. 1-deoxy-D-xylulose 5-phosphate is bound by residues glycine 162, 188–189 (AG), and 210–211 (NT).

It belongs to the ThiG family. Homotetramer. Forms heterodimers with either ThiH or ThiS.

It localises to the cytoplasm. The catalysed reaction is [ThiS sulfur-carrier protein]-C-terminal-Gly-aminoethanethioate + 2-iminoacetate + 1-deoxy-D-xylulose 5-phosphate = [ThiS sulfur-carrier protein]-C-terminal Gly-Gly + 2-[(2R,5Z)-2-carboxy-4-methylthiazol-5(2H)-ylidene]ethyl phosphate + 2 H2O + H(+). Its pathway is cofactor biosynthesis; thiamine diphosphate biosynthesis. Catalyzes the rearrangement of 1-deoxy-D-xylulose 5-phosphate (DXP) to produce the thiazole phosphate moiety of thiamine. Sulfur is provided by the thiocarboxylate moiety of the carrier protein ThiS. In vitro, sulfur can be provided by H(2)S. The chain is Thiazole synthase from Wolinella succinogenes (strain ATCC 29543 / DSM 1740 / CCUG 13145 / JCM 31913 / LMG 7466 / NCTC 11488 / FDC 602W) (Vibrio succinogenes).